Reading from the N-terminus, the 386-residue chain is 4-hydroxy-3-methylbut-2-en-1-yl diphosphate synthase (flavodoxin) (386 aa).

Residues cysteine 289, cysteine 292, cysteine 324, and glutamate 331 each coordinate [4Fe-4S] cluster.

Belongs to the IspG family. [4Fe-4S] cluster serves as cofactor.

The catalysed reaction is (2E)-4-hydroxy-3-methylbut-2-enyl diphosphate + oxidized [flavodoxin] + H2O + 2 H(+) = 2-C-methyl-D-erythritol 2,4-cyclic diphosphate + reduced [flavodoxin]. It participates in isoprenoid biosynthesis; isopentenyl diphosphate biosynthesis via DXP pathway; isopentenyl diphosphate from 1-deoxy-D-xylulose 5-phosphate: step 5/6. In terms of biological role, converts 2C-methyl-D-erythritol 2,4-cyclodiphosphate (ME-2,4cPP) into 1-hydroxy-2-methyl-2-(E)-butenyl 4-diphosphate. The polypeptide is 4-hydroxy-3-methylbut-2-en-1-yl diphosphate synthase (flavodoxin) (Nitratidesulfovibrio vulgaris (strain ATCC 29579 / DSM 644 / CCUG 34227 / NCIMB 8303 / VKM B-1760 / Hildenborough) (Desulfovibrio vulgaris)).